The following is a 185-amino-acid chain: Prorelaxin (185 aa).

Positions 1 to 24 (MPRLFLFHLLGVCLLLNQFSRAVA) are cleaved as a signal peptide. 3 cysteine pairs are disulfide-bonded: Cys35/Cys172, Cys47/Cys185, and Cys171/Cys176. The propeptide at 56–157 (SLNQEDAPLK…LRSLGLDTHS (102 aa)) is connecting peptide.

The protein belongs to the insulin family. As to quaternary structure, heterodimer of a B chain and an A chain linked by two disulfide bonds.

It is found in the secreted. Relaxin is an ovarian hormone that acts with estrogen to produce dilatation of the birth canal in many mammals. May be involved in remodeling of connective tissues during pregnancy, promoting growth of pubic ligaments and ripening of the cervix. This Macaca mulatta (Rhesus macaque) protein is Prorelaxin (RLN).